We begin with the raw amino-acid sequence, 130 residues long: Hydrogenase maturation factor HypA (130 aa).

His2 is a Ni(2+) binding site. 4 residues coordinate Zn(2+): Cys74, Cys77, Cys90, and Cys93.

Belongs to the HypA/HybF family.

Its function is as follows. Involved in the maturation of [NiFe] hydrogenases. Required for nickel insertion into the metal center of the hydrogenase. The protein is Hydrogenase maturation factor HypA of Desulfatibacillum aliphaticivorans.